A 261-amino-acid chain; its full sequence is Indole-3-glycerol phosphate synthase (261 aa).

The protein belongs to the TrpC family.

The catalysed reaction is 1-(2-carboxyphenylamino)-1-deoxy-D-ribulose 5-phosphate + H(+) = (1S,2R)-1-C-(indol-3-yl)glycerol 3-phosphate + CO2 + H2O. The protein operates within amino-acid biosynthesis; L-tryptophan biosynthesis; L-tryptophan from chorismate: step 4/5. The sequence is that of Indole-3-glycerol phosphate synthase from Burkholderia pseudomallei (strain 1710b).